The chain runs to 742 residues: MRLQPLFVSLALAAPCALLPTASLSAAPAAAARQADTAPVLVTAAQWQQMASEGRRYPWFAKEQARTEATLKKMMKAGIDVPVPRDKGGGRTHEQHKRNYQALLAAGTLYRLTGDRAYVDYARDMLLQYAQLYPTLGPHPEGRGQIPGRVFWQVLNDSVWLVNAIQGYDAIRDALSAEDRNTIESKVFRPMAEFLVSEPKNYDQIHNHATWAVAATGMTGYVLRDQELVEKSLRGSQKDDKFGFLRQIDLLFSPDGYYEEGPYYQRYALAPFLLFANAIERNEPQRKIFARRDGVLLKAVDVLVQSSYGGLFFPINDAILDKGIDTEELVAGIGIAYARTGDDRLLSVAEQQKRLLLSPEGLQVAQALAANKAKPFDYHPMLLRDGPDGDRGGLAILRMNGERGQALVQKDTMQGMGHGHFDKLNWLFYDNGNPVVTDYGAARFLNVEAKRGGIYLAENRSWAKQTVAHNTLVVDEQSHFNGNWKRGEAHAPQVRFFQADADTQIASATMRDAYPGVAFTRTQALLRHPDLGLPVVLDLLQVHGDKAARYDLPLHFNGHIVTTGFEAEHFPSQRPVLGKDNGYQHLWLDARSKPGSEPRSLAWLLDGRFYTYRFGSSAPAQALLVESGANDPEFNLRREPALLQRVDGQKDVTFFSVLEPHGEYNGTAEYVHGADSRIREIVRTRGSDAEVIELRLASGARIALGVADNSATTSEHSVTVDGHVYRWNGSHARLDRSKGDGK.

The N-terminal stretch at 1 to 26 (MRLQPLFVSLALAAPCALLPTASLSA) is a signal peptide. Substrate-binding positions include Arg143, 153–156 (QVLN), Gln204, His208, and 263–266 (YYQR). The active-site Proton donor is the Tyr264. The Proton acceptor role is filled by His418. 2 residues coordinate Zn(2+): His420 and Asp438. Position 443 (Arg443) interacts with substrate. Residue His469 participates in Zn(2+) binding. Glu669 is a binding site for substrate.

It belongs to the polysaccharide lyase 17 family. Homodimer. Requires Zn(2+) as cofactor.

Its subcellular location is the periplasm. The enzyme catalyses Cleavage of 4-deoxy-alpha-L-erythro-hex-4-enopyranuronoside oligosaccharides into 4-deoxy-alpha-L-erythro-hex-4-enopyranuronate monosaccharides.. Functionally, polysaccharide lyase that catalyzes the depolymerization of alginate via a beta-elimination mechanism, cleaving the beta-1,4 glycosidic bond between two adjacent sugar residues. Acts specifically on alginate and each of its block structures, with highest activity toward poly-beta-D-mannuronate (poly-ManA). Shows an exolytic mode of action, producing unsaturated monomers. Displays a very low activity against poly-beta-D-glucuronate (poly-GlcA), and is not active on poly-alpha-D-galacturonate, hyaluronan, heparin, heparan sulfate and chondroitin sulfate. This Stenotrophomonas maltophilia (strain K279a) protein is Alginate lyase.